The primary structure comprises 361 residues: mRNA export factor ICP27 homolog (361 aa).

Residues 1–15 (MEDSGNSSGSEASRS) are compositionally biased toward low complexity. Positions 1-107 (MEDSGNSSGS…SESARAAVSA (107 aa)) are disordered. Residues 16-36 (GSEERRPVRERLGSRPPERRP) show a composition bias toward basic and acidic residues. An RGG-box region spans residues 45–54 (RRRRGGRGGR). Residues 80–99 (RQEADRPDGGPDAPPDRLSE) show a composition bias toward basic and acidic residues. Residues Cys-253, His-328, Cys-332, and Cys-337 each contribute to the Zn(2+) site. A CHC2-type zinc finger spans residues 253 to 337 (CYLRDTPVDE…HKTGCDAPTC (85 aa)).

The protein belongs to the HHV-1 ICP27 protein family. Homodimer. Homodimerization is required for transactivation. Associates in a complex with RNA, and host export factors NXF1/TAP and ALYREF; these interactions allow nuclear export of viral transcripts. Interacts with three host shuttling SR proteins SRSF1, SRSF3 and SRSF7. Interacts with host SRPK1. Interacts with IE62; this interaction enhances IE62 transactivation.

It is found in the host cytoplasm. It localises to the host nucleus. In terms of biological role, multifunctional regulator of the expression of viral genes that mediates nuclear export of viral intronless mRNAs. This immediate early (EI) protein promotes the nuclear export of viral intronless mRNAs by interacting with mRNAs and host NXF1/TAP. The protein is mRNA export factor ICP27 homolog of Suid herpesvirus 1 (strain Kaplan) (SuHV-1).